The chain runs to 208 residues: Uracil phosphoribosyltransferase (208 aa).

5-phospho-alpha-D-ribose 1-diphosphate is bound by residues Arg-78, Arg-103, and 130 to 138; that span reads DPMLATGGS. Residues Ile-193 and 198–200 contribute to the uracil site; that span reads GDA. Residue Asp-199 participates in 5-phospho-alpha-D-ribose 1-diphosphate binding.

Belongs to the UPRTase family. Mg(2+) is required as a cofactor.

The catalysed reaction is UMP + diphosphate = 5-phospho-alpha-D-ribose 1-diphosphate + uracil. The protein operates within pyrimidine metabolism; UMP biosynthesis via salvage pathway; UMP from uracil: step 1/1. Allosterically activated by GTP. Its function is as follows. Catalyzes the conversion of uracil and 5-phospho-alpha-D-ribose 1-diphosphate (PRPP) to UMP and diphosphate. This chain is Uracil phosphoribosyltransferase, found in Citrobacter koseri (strain ATCC BAA-895 / CDC 4225-83 / SGSC4696).